The following is a 249-amino-acid chain: MGVAFDKCDTRPAHIDAILNGLDRYNPETTTVFQDYVVQQCEERTFDCYANLALLKLYQFNPHLLQPETVTNILAKALTVFPSPAFSLCLALLPAHTQPFPTADTDASQTSDFVESIQKLARLSTLLESAQYAQFWSTLNSDDLYADLVADVAGFEELVRIRIAIEVGKAFREINAEVLEQWLDLRSREALEKFVTEVCSWEVDKTGPNGTVVKVPTNKENEARSEVKSERVGVEMFGRVIRRGFEQAA.

Positions 46-222 constitute a PCI domain; it reads FDCYANLALL…VKVPTNKENE (177 aa).

This sequence belongs to the eIF-3 subunit K family. Component of the eukaryotic translation initiation factor 3 (eIF-3) complex.

It localises to the cytoplasm. Functionally, component of the eukaryotic translation initiation factor 3 (eIF-3) complex, which is involved in protein synthesis of a specialized repertoire of mRNAs and, together with other initiation factors, stimulates binding of mRNA and methionyl-tRNAi to the 40S ribosome. The eIF-3 complex specifically targets and initiates translation of a subset of mRNAs involved in cell proliferation. The chain is Eukaryotic translation initiation factor 3 subunit K from Aspergillus fumigatus (strain CBS 144.89 / FGSC A1163 / CEA10) (Neosartorya fumigata).